Reading from the N-terminus, the 342-residue chain is (Lyso)-N-acylphosphatidylethanolamine lipase (342 aa).

The AB hydrolase-1 domain occupies 70–201 (PLVMVHGFGG…KAVASVLGRS (132 aa)).

The protein belongs to the peptidase S33 family. ABHD4/ABHD5 subfamily.

It carries out the reaction N-hexadecanoyl-1,2-di-(9Z-octadecenoyl)-sn-glycero-3-phosphoethanolamine + H2O = N-hexadecanoyl-1-(9Z-octadecenoyl)-sn-glycero-3-phosphoethanolamine + (9Z)-octadecenoate + H(+). The catalysed reaction is an N-acyl-1,2-diacyl-sn-glycero-3-phosphoethanolamine + H2O = N,1-diacyl-sn-glycero-3-phosphoethanolamine + a fatty acid + H(+). The enzyme catalyses N-hexadecanoyl-1-(9Z-octadecenoyl)-sn-glycero-3-phosphoethanolamine + H2O = N-hexadecanoyl-sn-glycero-3-phosphoethanolamine + (9Z)-octadecenoate + H(+). It catalyses the reaction N-octadecanoyl-1-(9Z-octadecenoyl)-sn-glycero-3-phosphoethanolamine + H2O = N-octadecanoyl-sn-glycero-3-phospho-ethanolamine + (9Z)-octadecenoate + H(+). It carries out the reaction N-eicosanoyl-1-(9Z-octadecenoyl)-sn-glycero-3-phosphoethanolamine + H2O = N-eicosanoyl-sn-glycero-3-phosphoethanolamine + (9Z)-octadecenoate + H(+). The catalysed reaction is N,1-di-(9Z-octadecenoyl)-sn-glycero-3-phosphoethanolamine + H2O = N-(9Z-octadecenoyl)-sn-glycero-3-phosphoethanolamine + (9Z)-octadecenoate + H(+). The enzyme catalyses N-(5Z,8Z,11Z,14Z-eicosatetraenoyl)-1-(9Z-octadecenoyl)-sn-glycero-3-phosphoethanolamine + H2O = N-(5Z,8Z,11Z,14Z-eicosatetraenoyl)-sn-glycero-3-phosphoethanolamine + (9Z)-octadecenoate + H(+). It catalyses the reaction 1-octadecanoyl-2-(9Z-octadecenoyl)-sn-glycero-3-phospho-(N-hexadecanoyl)-serine + H2O = 1-octadecanoyl-2-hydroxy-sn-glycero-3-phospho-(N-hexadecanoyl)-serine + (9Z)-octadecenoate + H(+). It carries out the reaction 1-O-(1Z-octadecenoyl)-2-(9Z-octadecenoyl)-sn-glycero-3-phospho-N-hexadecanoyl-ethanolamine + H2O = 1-O-(1Z-octadecenyl)-sn-glycero-3-phospho-N-hexadecanoyl-ethanolamine + (9Z)-octadecenoate + H(+). The catalysed reaction is N,1-diacyl-sn-glycero-3-phosphoethanolamine + H2O = N-acyl-sn-glycero-3-phosphoethanolamine + a fatty acid + H(+). Functionally, lysophospholipase selective for N-acyl phosphatidylethanolamine (NAPE). Contributes to the biosynthesis of N-acyl ethanolamines, including the endocannabinoid anandamide by hydrolyzing the sn-1 and sn-2 acyl chains from N-acyl phosphatidylethanolamine (NAPE) generating glycerophospho-N-acyl ethanolamine (GP-NAE), an intermediate for N-acyl ethanolamine biosynthesis. Hydrolyzes substrates bearing saturated, monounsaturated, polyunsaturated N-acyl chains. Shows no significant activity towards other lysophospholipids, including lysophosphatidylcholine, lysophosphatidylethanolamine and lysophosphatidylserine. This is (Lyso)-N-acylphosphatidylethanolamine lipase from Homo sapiens (Human).